The sequence spans 288 residues: Oxaloacetate decarboxylase (288 aa).

S47 serves as a coordination point for substrate. D85 contributes to the Mg(2+) binding site. Positions 156 and 232 each coordinate substrate.

The protein belongs to the isocitrate lyase/PEP mutase superfamily. Oxaloacetate decarboxylase family. As to quaternary structure, homotetramer; dimer of dimers. Mg(2+) is required as a cofactor.

The enzyme catalyses oxaloacetate + H(+) = pyruvate + CO2. In terms of biological role, catalyzes the decarboxylation of oxaloacetate into pyruvate. Seems to play a role in maintaining cellular concentrations of bicarbonate and pyruvate. The polypeptide is Oxaloacetate decarboxylase (Bradyrhizobium diazoefficiens (strain JCM 10833 / BCRC 13528 / IAM 13628 / NBRC 14792 / USDA 110)).